We begin with the raw amino-acid sequence, 684 residues long: Pheromone-processing carboxypeptidase KEX1 (684 aa).

An N-terminal signal peptide occupies residues 1–16 (MRFWYFSAILWVVCQA). At 17–588 (LPSKKQYSVA…QRKRRKGTFK (572 aa)) the chain is on the lumenal side. Catalysis depends on residues serine 181 and aspartate 390. Residues asparagine 443 and asparagine 451 are each glycosylated (N-linked (GlcNAc...) asparagine). Histidine 454 is a catalytic residue. Residues 498 to 582 (DNSKLGVLGI…KEEQDRQRKR (85 aa)) are disordered. Residues 514-547 (EEEELEEEFDQYVDELEEGESESGLLDDDKEDET) are compositionally biased toward acidic residues. Residues 554 to 578 (NDDKNKGGEDKPNENPDKEKEEQDR) show a composition bias toward basic and acidic residues. A helical membrane pass occupies residues 589–609 (IFGITILVVLTLGSFVFYIYI). At 610–684 (RKHTNKTRAI…LDESFELENL (75 aa)) the chain is on the cytoplasmic side. Residues 641–684 (LEHGYDFETDQSQPRSGQSAPKKNGSYTRVPNTELDESFELENL) are disordered. Residues 650–671 (DQSQPRSGQSAPKKNGSYTRVP) show a composition bias toward polar residues. The segment covering 674–684 (ELDESFELENL) has biased composition (acidic residues).

Belongs to the peptidase S10 family.

Its subcellular location is the golgi apparatus. The protein localises to the trans-Golgi network membrane. The catalysed reaction is Preferential release of a C-terminal arginine or lysine residue.. Protease with a carboxypeptidase B-like function involved in the C-terminal processing of the lysine and arginine residues from protein precursors. Promotes cell fusion and is involved in the programmed cell death. The protein is Pheromone-processing carboxypeptidase KEX1 (KEX1) of Zygosaccharomyces rouxii (strain ATCC 2623 / CBS 732 / NBRC 1130 / NCYC 568 / NRRL Y-229).